The following is a 356-amino-acid chain: Tyrosine recombinase XerS (356 aa).

One can recognise a Core-binding (CB) domain in the interval 16-121 (IMPWYVLDYY…ALSSLYKYLT (106 aa)). The Tyr recombinase domain occupies 169 to 354 (AFLDYVDKEY…VNDEQKNALD (186 aa)). Active-site residues include arginine 210, lysine 234, histidine 306, arginine 309, and histidine 332. Tyrosine 341 functions as the O-(3'-phospho-DNA)-tyrosine intermediate in the catalytic mechanism.

The protein belongs to the 'phage' integrase family. XerS subfamily.

It localises to the cytoplasm. Its activity is regulated as follows. FtsK is required for recombination. In terms of biological role, site-specific tyrosine recombinase, which acts by catalyzing the cutting and rejoining of the recombining DNA molecules. Essential to convert dimers of the bacterial chromosome into monomers to permit their segregation at cell division. This Streptococcus pyogenes serotype M6 (strain ATCC BAA-946 / MGAS10394) protein is Tyrosine recombinase XerS.